A 263-amino-acid polypeptide reads, in one-letter code: Troponin T, slow skeletal muscle (263 aa).

Positions 1 to 38 (MSDAEEQEYEEEQPEEEEAAEEEEEAPEEPEPAAEPEE) are enriched in acidic residues. 2 disordered regions span residues 1 to 64 (MSDA…RVDF) and 109 to 154 (AERA…KKKV). Ser2 bears the Phosphoserine; by CK2 mark. The span at 44 to 56 (SRPVVPPLIPPKI) shows a compositional bias: pro residues. Residues 109–150 (AERAEQQRFRTEKERERQAKLAEEKMRKEEEEAKKRAEDDAK) show a composition bias toward basic and acidic residues.

Belongs to the troponin T family. As to quaternary structure, interacts with TPM3. As to expression, expressed dominantly in slow muscles, like masseter, diaphragm, psoas major and spinnalis. Isoform 2 is also expressed in fast muscles.

Functionally, troponin T is the tropomyosin-binding subunit of troponin, the thin filament regulatory complex which confers calcium-sensitivity to striated muscle actomyosin ATPase activity. The sequence is that of Troponin T, slow skeletal muscle (TNNT1) from Bos taurus (Bovine).